The chain runs to 413 residues: E3 ubiquitin ligase ICP22 (413 aa).

Positions Met-1 to Ile-124 are disordered. The span at Gly-62–Gly-76 shows a compositional bias: basic and acidic residues. Low complexity predominate over residues Ser-84–Gly-97. The residue at position 189 (Tyr-189) is a Phosphotyrosine; by host. Disordered stretches follow at residues Leu-289–Gly-334 and Ala-370–Glu-390. A compositionally biased stretch (acidic residues) spans Ser-297–Asp-309.

This sequence belongs to the herpesviridae ICP22 family. Post-translationally, tyrosine phosphorylated.

Its subcellular location is the host nucleus. It participates in protein modification; protein ubiquitination. Its function is as follows. Functions as an E3 ubiquitin ligase and plays a role in the inhibition of innate immunity by preventing IFN-mediated signaling. Induces the ubiquitination and degradation of host STAT1, STAT2 and IRF9, resulting in the blockade of ISGF3 nuclear translocation. In Human herpesvirus 2 (strain HG52) (HHV-2), this protein is E3 ubiquitin ligase ICP22.